The chain runs to 711 residues: Progesterone receptor (711 aa).

The interval 1-347 is modulating, Pro-Rich; that stretch reads MEDKSKQCLQ…YGFDALPRKI (347 aa). 2 NR C4-type zinc fingers span residues 348–368 and 384–408; these read CLICSDEASGCHYGALTCGSC and CAGRNDCIGDKIRRKNCPSCRLKKC. Residues 348 to 420 constitute a DNA-binding region (nuclear receptor); sequence CLICSDEASG…AGMVLGGRKF (73 aa). Positions 457–691 constitute an NR LBD domain; the sequence is QEVQYFPELL…EFPEMMTEVI (235 aa).

It belongs to the nuclear hormone receptor family. NR3 subfamily. As to expression, expressed in all tissues examined: highly expressed in testis and brain. Also expressed in heart, lung, liver, kidney, stomach and small intestine.

It localises to the nucleus. In terms of biological role, the steroid hormones and their receptors are involved in the regulation of eukaryotic gene expression and affect cellular proliferation and differentiation in target tissues. This chain is Progesterone receptor (pgr), found in Rana dybowskii (Dybovsky's frog).